We begin with the raw amino-acid sequence, 336 residues long: Phosphate acyltransferase (336 aa).

Belongs to the PlsX family. Homodimer. Probably interacts with PlsY.

The protein resides in the cytoplasm. It catalyses the reaction a fatty acyl-[ACP] + phosphate = an acyl phosphate + holo-[ACP]. Its pathway is lipid metabolism; phospholipid metabolism. Functionally, catalyzes the reversible formation of acyl-phosphate (acyl-PO(4)) from acyl-[acyl-carrier-protein] (acyl-ACP). This enzyme utilizes acyl-ACP as fatty acyl donor, but not acyl-CoA. This is Phosphate acyltransferase from Pseudomonas putida (strain GB-1).